The following is a 208-amino-acid chain: NAD(P)H-quinone oxidoreductase subunit I (208 aa).

4Fe-4S ferredoxin-type domains lie at 55–84 and 95–124; these read GRIH…VDWV and RNYS…MTEE. [4Fe-4S] cluster-binding residues include Cys-64, Cys-67, Cys-70, Cys-74, Cys-104, Cys-107, Cys-110, and Cys-114.

The protein belongs to the complex I 23 kDa subunit family. NDH-1 is composed of at least 11 different subunits. [4Fe-4S] cluster is required as a cofactor.

The protein localises to the cellular thylakoid membrane. It carries out the reaction a plastoquinone + NADH + (n+1) H(+)(in) = a plastoquinol + NAD(+) + n H(+)(out). The enzyme catalyses a plastoquinone + NADPH + (n+1) H(+)(in) = a plastoquinol + NADP(+) + n H(+)(out). Its function is as follows. NDH-1 shuttles electrons from an unknown electron donor, via FMN and iron-sulfur (Fe-S) centers, to quinones in the respiratory and/or the photosynthetic chain. The immediate electron acceptor for the enzyme in this species is believed to be plastoquinone. Couples the redox reaction to proton translocation, and thus conserves the redox energy in a proton gradient. The chain is NAD(P)H-quinone oxidoreductase subunit I from Prochlorococcus marinus (strain MIT 9301).